The chain runs to 252 residues: Bidirectional sugar transporter SWEET3b (252 aa).

Residues 1-8 are Extracellular-facing; sequence MVSNTIRV. A helical membrane pass occupies residues 9–29; the sequence is AVGILGNAASMLLYAAPILTF. Residues 10–98 enclose the MtN3/slv 1 domain; sequence VGILGNAASM…SIYTWFAPRE (89 aa). Residues 30–43 lie on the Cytoplasmic side of the membrane; sequence RRVIKKGSVEEFSC. The helical transmembrane segment at 44 to 64 threads the bilayer; the sequence is VPYILALFNCLLYTWYGLPVV. Residues 65–75 lie on the Extracellular side of the membrane; it reads SSGWENSTVSS. Asn70 is a glycosylation site (N-linked (GlcNAc...) asparagine). A helical membrane pass occupies residues 76–96; the sequence is INGLGILLEIAFISIYTWFAP. Topologically, residues 97–105 are cytoplasmic; the sequence is RERKKFVLR. The helical transmembrane segment at 106 to 126 threads the bilayer; that stretch reads MVLPVLAFFALTAIFSSFLFH. Topologically, residues 127-132 are extracellular; it reads THGLRK. The helical transmembrane segment at 133-153 threads the bilayer; sequence VFVGSIGLVASISMYSSPMVA. The region spanning 134–219 is the MtN3/slv 2 domain; that stretch reads FVGSIGLVAS…LYCIYRKSHK (86 aa). The Cytoplasmic portion of the chain corresponds to 154 to 167; the sequence is AKQVITTKSVEFMP. The helical transmembrane segment at 168 to 188 threads the bilayer; that stretch reads FYLSLFSFLSSALWMIYGLLG. The Extracellular segment spans residues 189 to 190; the sequence is KD. Residues 191–211 form a helical membrane-spanning segment; it reads LFIASPNFIGCPMGILQLVLY. Residues 212 to 252 lie on the Cytoplasmic side of the membrane; it reads CIYRKSHKEAEKLHDIDQENGLKVVTTHEKITGREPEAQRD.

It belongs to the SWEET sugar transporter family. As to quaternary structure, forms homooligomers and/or heterooligomers.

It is found in the cell membrane. In terms of biological role, mediates both low-affinity uptake and efflux of sugar across the plasma membrane. The protein is Bidirectional sugar transporter SWEET3b (SWEET3B) of Oryza sativa subsp. japonica (Rice).